Here is a 1010-residue protein sequence, read N- to C-terminus: 2-oxoglutarate dehydrogenase-like, mitochondrial (1010 aa).

The N-terminal 107 residues, 1-107 (MSQLRLLLFR…RASVSSCTKT (107 aa)), are a transit peptide targeting the mitochondrion. The disordered stretch occupies residues 28–47 (GGRRRSSGPPTTIPRSRGGV). Positions 130, 143, and 145 each coordinate Ca(2+). The thiamine diphosphate site is built by R299, D398, N431, I433, and Q663. Mg(2+) contacts are provided by D398, N431, and I433.

This sequence belongs to the alpha-ketoglutarate dehydrogenase family. As to quaternary structure, the OGDHC complex comprises multiple copies of three catalytic enzyme components, the 2-oxoglutarate dehydrogenase (OGDH/E1), the dihydrolipoamide dehydrogenase (DLST/E2) and the dihydrolipoamide dehydrogenase (DLD/E3). OGDHL/E1-like isoenzyme may replace OGDH in the OGDHC complex in the brain. The presence of either ODGH/E1 or ODGHL/E1-like isoenzyme in the complex may depend on its tissular distribution. Thiamine diphosphate is required as a cofactor. It depends on Mg(2+) as a cofactor. In terms of tissue distribution, the OGDHL-containing OGDHC complex is present in the brain, but not in the heart.

It is found in the mitochondrion matrix. The enzyme catalyses N(6)-[(R)-lipoyl]-L-lysyl-[protein] + 2-oxoglutarate + H(+) = N(6)-[(R)-S(8)-succinyldihydrolipoyl]-L-lysyl-[protein] + CO2. 2-oxoglutarate dehydrogenase (E1-like) component of the 2-oxoglutarate dehydrogenase multienzyme complex (OGDHC) which mediates the decarboxylation of alpha-ketoglutarate in the tricarboxylic acid cycle. The OGDHC complex catalyzes the overall conversion of 2-oxoglutarate to succinyl-CoA and CO(2) while reducing NAD(+) to NADH. The OGDHC complex is mainly active in the mitochondrion. Involved in the inhibition of cell proliferation and in apoptosis. The sequence is that of 2-oxoglutarate dehydrogenase-like, mitochondrial from Rattus norvegicus (Rat).